A 462-amino-acid chain; its full sequence is Gamma-aminobutyric acid receptor subunit alpha-5 (462 aa).

The N-terminal stretch at 1-31 (MDNGMFSSFIMIKNLLLFCISMNLASHFGFS) is a signal peptide. Topologically, residues 32 to 260 (QMPTSSVKAE…FHLKRKIGYF (229 aa)) are extracellular. Asn45 carries N-linked (GlcNAc...) asparagine glycosylation. A 4-aminobutanoate-binding site is contributed by Arg101. The N-linked (GlcNAc...) asparagine glycan is linked to Asn145. Position 164 (Thr164) interacts with 4-aminobutanoate. An intrachain disulfide couples Cys173 to Cys187. Residues Asn207 and Asn236 are each glycosylated (N-linked (GlcNAc...) asparagine). The next 3 helical transmembrane spans lie at 261-281 (VIQTYLPCIMTVILSQVSFWL), 287-308 (PARTVFGVTTVLTMTTLSISAR), and 319-340 (AMDWFIAVCYAFVFSALIEFAT). Topologically, residues 341-427 (VNYFTKRGWA…TYNSISKIDK (87 aa)) are cytoplasmic. Residue Lys355 forms a Glycyl lysine isopeptide (Lys-Gly) (interchain with G-Cter in ubiquitin) linkage. Residues 375–412 (TNAYTTGKMTHPPNIPKEQTPAGTTNASSASVKPEDKA) are disordered. The segment covering 395–405 (PAGTTNASSAS) has biased composition (polar residues). Residues 428–448 (MSRIIFPLLFGTFNLVYWATY) traverse the membrane as a helical segment.

It belongs to the ligand-gated ion channel (TC 1.A.9) family. Gamma-aminobutyric acid receptor (TC 1.A.9.5) subfamily. GABRA5 sub-subfamily. As to quaternary structure, heteropentamer, formed by a combination of alpha (GABRA1-6), beta (GABRB1-3), gamma (GABRG1-3), delta (GABRD), epsilon (GABRE), rho (GABRR1-3), pi (GABRP) and theta (GABRQ) chains, each subunit exhibiting distinct physiological and pharmacological properties.

It is found in the postsynaptic cell membrane. It localises to the cell membrane. It catalyses the reaction chloride(in) = chloride(out). In terms of biological role, alpha subunit of the heteropentameric ligand-gated chloride channel gated by gamma-aminobutyric acid (GABA), a major inhibitory neurotransmitter in the brain. GABA-gated chloride channels, also named GABA(A) receptors (GABAAR), consist of five subunits arranged around a central pore and contain GABA active binding site(s) located at the alpha and beta subunit interface(s). When activated by GABA, GABAARs selectively allow the flow of chloride anions across the cell membrane down their electrochemical gradient. GABAARs containing alpha-5/GABRA5 subunits are mainly extrasynaptic and contribute to the tonic GABAergic inhibition in the hippocampus. Extrasynaptic alpha-5-containing GABAARs in CA1 pyramidal neurons play a role in learning and memory processes. This chain is Gamma-aminobutyric acid receptor subunit alpha-5 (GABRA5), found in Bos taurus (Bovine).